Here is a 428-residue protein sequence, read N- to C-terminus: Serine hydroxymethyltransferase (428 aa).

Position 120-122 (120-122 (GHI)) interacts with (6S)-5,6,7,8-tetrahydrofolate. N6-(pyridoxal phosphate)lysine is present on Lys-226.

It belongs to the SHMT family. Homodimer. The cofactor is pyridoxal 5'-phosphate.

Its subcellular location is the cytoplasm. The catalysed reaction is 5,10-methylenetetrahydromethanopterin + glycine + H2O = 5,6,7,8-tetrahydromethanopterin + L-serine. Its pathway is amino-acid biosynthesis; glycine biosynthesis; glycine from L-serine: step 1/1. Catalyzes the reversible interconversion of serine and glycine with tetrahydromethanopterin (H4MPT) serving as the one-carbon carrier. Also exhibits a pteridine-independent aldolase activity toward beta-hydroxyamino acids, producing glycine and aldehydes, via a retro-aldol mechanism. The chain is Serine hydroxymethyltransferase from Methanopyrus kandleri (strain AV19 / DSM 6324 / JCM 9639 / NBRC 100938).